Consider the following 150-residue polypeptide: Allograft inflammatory factor 1-like (150 aa).

Serine 2 is modified (N-acetylserine). Serine 2 carries the phosphoserine modification. Positions 47-82 (EKLTAFKEKYMEFDLNNEGEIDLMSLKRMMEKLGVP) constitute an EF-hand 1 domain. 4 residues coordinate Ca(2+): aspartate 60, asparagine 62, glutamate 64, and glutamate 66. Residues 83–117 (KTHLEMKKMISEVTGGVSDTISYRDFVNMMLGKRS) form the EF-hand 2; degenerate domain. The interval 129 to 150 (KANESSPKPVGPPPERDIASLP) is disordered. Serine 134 is modified (phosphoserine).

As to quaternary structure, homodimer (Potential). Monomer.

Its subcellular location is the cytoplasm. The protein resides in the cytoskeleton. The protein localises to the cell projection. It localises to the ruffle membrane. Its function is as follows. Actin-binding protein that promotes actin bundling. May neither bind calcium nor depend on calcium for function. The protein is Allograft inflammatory factor 1-like (AIF1L) of Homo sapiens (Human).